The primary structure comprises 618 residues: UvrABC system protein C (618 aa).

Residues 15-93 (RTPGVYLMKD…IKEHHPRYNI (79 aa)) enclose the GIY-YIG domain. Positions 203–238 (NNLLRELRERMKMAAEQMNYEEAAFLRDRIRAIEET) constitute a UVR domain.

Belongs to the UvrC family. Interacts with UvrB in an incision complex.

The protein resides in the cytoplasm. Functionally, the UvrABC repair system catalyzes the recognition and processing of DNA lesions. UvrC both incises the 5' and 3' sides of the lesion. The N-terminal half is responsible for the 3' incision and the C-terminal half is responsible for the 5' incision. This Syntrophus aciditrophicus (strain SB) protein is UvrABC system protein C.